Reading from the N-terminus, the 97-residue chain is Putative pterin-4-alpha-carbinolamine dehydratase (97 aa).

This sequence belongs to the pterin-4-alpha-carbinolamine dehydratase family.

It catalyses the reaction (4aS,6R)-4a-hydroxy-L-erythro-5,6,7,8-tetrahydrobiopterin = (6R)-L-erythro-6,7-dihydrobiopterin + H2O. The sequence is that of Putative pterin-4-alpha-carbinolamine dehydratase from Cyanothece sp. (strain PCC 7425 / ATCC 29141).